Reading from the N-terminus, the 407-residue chain is Aminomethyltransferase, mitochondrial (407 aa).

The N-terminal 29 residues, 1-29 (MRGGLWQVGQSITRRLGQSDKKTIVRRWY), are a transit peptide targeting the mitochondrion. Residues Glu234, Arg265, and Tyr403 each contribute to the substrate site.

Belongs to the GcvT family. In terms of assembly, the glycine cleavage system is composed of four proteins: P, T, L and H.

It localises to the mitochondrion. It catalyses the reaction N(6)-[(R)-S(8)-aminomethyldihydrolipoyl]-L-lysyl-[protein] + (6S)-5,6,7,8-tetrahydrofolate = N(6)-[(R)-dihydrolipoyl]-L-lysyl-[protein] + (6R)-5,10-methylene-5,6,7,8-tetrahydrofolate + NH4(+). Its function is as follows. The glycine cleavage system catalyzes the degradation of glycine. This is Aminomethyltransferase, mitochondrial (GDCST) from Flaveria trinervia (Clustered yellowtops).